The sequence spans 296 residues: Phosphatidylserine decarboxylase proenzyme (296 aa).

Residues Asp113, His169, and Ser256 each act as charge relay system; for autoendoproteolytic cleavage activity in the active site. Ser256 functions as the Schiff-base intermediate with substrate; via pyruvic acid; for decarboxylase activity in the catalytic mechanism. Ser256 carries the post-translational modification Pyruvic acid (Ser); by autocatalysis.

This sequence belongs to the phosphatidylserine decarboxylase family. PSD-B subfamily. Prokaryotic type II sub-subfamily. As to quaternary structure, heterodimer of a large membrane-associated beta subunit and a small pyruvoyl-containing alpha subunit. The cofactor is pyruvate. Post-translationally, is synthesized initially as an inactive proenzyme. Formation of the active enzyme involves a self-maturation process in which the active site pyruvoyl group is generated from an internal serine residue via an autocatalytic post-translational modification. Two non-identical subunits are generated from the proenzyme in this reaction, and the pyruvate is formed at the N-terminus of the alpha chain, which is derived from the carboxyl end of the proenzyme. The autoendoproteolytic cleavage occurs by a canonical serine protease mechanism, in which the side chain hydroxyl group of the serine supplies its oxygen atom to form the C-terminus of the beta chain, while the remainder of the serine residue undergoes an oxidative deamination to produce ammonia and the pyruvoyl prosthetic group on the alpha chain. During this reaction, the Ser that is part of the protease active site of the proenzyme becomes the pyruvoyl prosthetic group, which constitutes an essential element of the active site of the mature decarboxylase.

The protein resides in the cell membrane. The catalysed reaction is a 1,2-diacyl-sn-glycero-3-phospho-L-serine + H(+) = a 1,2-diacyl-sn-glycero-3-phosphoethanolamine + CO2. It functions in the pathway phospholipid metabolism; phosphatidylethanolamine biosynthesis; phosphatidylethanolamine from CDP-diacylglycerol: step 2/2. Functionally, catalyzes the formation of phosphatidylethanolamine (PtdEtn) from phosphatidylserine (PtdSer). The chain is Phosphatidylserine decarboxylase proenzyme from Clostridium beijerinckii (strain ATCC 51743 / NCIMB 8052) (Clostridium acetobutylicum).